The following is a 157-amino-acid chain: MGFPKVERLLINYKTLDEFKKFKGCGAQELSMLEELQANIIENDSESPFYGIYYGGSLIARMSLYMKRNGGEPFEITGPYLELYKLEVLPTFQKQGFGQMLVNHAKQMQFPIKTIARIHSAGFWDKLNFTPVSVTDGDFYIWHPETNLNAVTNEESA.

Residues 9–154 (LLINYKTLDE…ETNLNAVTNE (146 aa)) enclose the N-acetyltransferase domain.

This is an uncharacterized protein from Bacillus cereus (strain B4264).